A 358-amino-acid chain; its full sequence is Methylthioribose-1-phosphate isomerase (358 aa).

Substrate contacts are provided by residues 54–56, Arg-96, and Gln-205; that span reads RGA. Asp-246 (proton donor) is an active-site residue. Residue 256 to 257 participates in substrate binding; that stretch reads NK.

The protein belongs to the eIF-2B alpha/beta/delta subunits family. MtnA subfamily.

The enzyme catalyses 5-(methylsulfanyl)-alpha-D-ribose 1-phosphate = 5-(methylsulfanyl)-D-ribulose 1-phosphate. It functions in the pathway amino-acid biosynthesis; L-methionine biosynthesis via salvage pathway; L-methionine from S-methyl-5-thio-alpha-D-ribose 1-phosphate: step 1/6. In terms of biological role, catalyzes the interconversion of methylthioribose-1-phosphate (MTR-1-P) into methylthioribulose-1-phosphate (MTRu-1-P). This is Methylthioribose-1-phosphate isomerase from Pseudomonas savastanoi pv. phaseolicola (strain 1448A / Race 6) (Pseudomonas syringae pv. phaseolicola (strain 1448A / Race 6)).